A 498-amino-acid chain; its full sequence is Neuronal acetylcholine receptor subunit beta-4 (498 aa).

Positions 1-21 (MRRAPSLVLFFLVALCGRGNC) are cleaved as a signal peptide. At 22–239 (RVANAEEKLM…RKPLFYTINL (218 aa)) the chain is on the extracellular side. Residues Asn-36, Asn-93, Asn-138, and Asn-166 are each glycosylated (N-linked (GlcNAc...) asparagine). A disulfide bridge links Cys-153 with Cys-167. The helical transmembrane segment at 240–255 (IIPCVLTTLLAILVFY) threads the bilayer. At 256-261 (LPSDCG) the chain is on the cytoplasmic side. Position 262 (Glu-262) interacts with Na(+). A helical membrane pass occupies residues 262-277 (EKMTLCISVLLALTFF). At 278 to 296 (LLLISKIVPPTSLDVPLIG) the chain is on the extracellular side. A helical transmembrane segment spans residues 297–321 (KYLMFTMVLVTFSIVTSVCVLNVHH). Residues 322–454 (RSPSTHTMAP…QSVVEDWKYV (133 aa)) are Cytoplasmic-facing. Residues 357–377 (ARAFPPSKSCVTKPEATATST) are disordered. A helical membrane pass occupies residues 455–478 (AMVVDRLFLWVFMFVCVLGTVGLF). The Extracellular segment spans residues 479–498 (LPPLFQTHAASEGPYAAQRD).

The protein belongs to the ligand-gated ion channel (TC 1.A.9) family. Acetylcholine receptor (TC 1.A.9.1) subfamily. Beta-4/CHRNB4 sub-subfamily. Neuronal AChR is composed of two different types of subunits: alpha and beta. CHRNB4/Beta-4 subunit can be combined to CHRNA2/alpha-2, CHRNA3/alpha-3 or CHRNA4/alpha-4, CHRNA5/alpha-5 and CHRNB3/beta-3 to give rise to functional receptors. Forms stoichiometries such as (CHRNA3)2:(CHRNB4)3 or (CHRNA3:CHRNB4)2:CHRNB3. Interacts with RIC3; which is required for proper folding and assembly. Interacts with LYPD6.

The protein resides in the synaptic cell membrane. Its subcellular location is the cell membrane. The enzyme catalyses Ca(2+)(in) = Ca(2+)(out). It catalyses the reaction K(+)(in) = K(+)(out). It carries out the reaction Na(+)(in) = Na(+)(out). Activated by a myriad of ligands such as acetylcholine, cytisine, nicotine, choline and epibatidine. The heteropentamer CHRNA3:CHRNB4 activity is blocked by the alpha-conotoxin ImI and AuIB. In terms of biological role, component of neuronal acetylcholine receptors (nAChRs) that function as pentameric, ligand-gated cation channels with high calcium permeability among other activities. nAChRs are excitatory neurotrasnmitter receptors formed by a collection of nAChR subunits known to mediate synaptic transmission in the nervous system and the neuromuscular junction. Each nAchR subunit confers differential attributes to channel properties, including activation, deactivation and desensitization kinetics, pH sensitivity, cation permeability, and binding to allosteric modulators. CHRNB4 forms heteropentameric neuronal acetylcholine receptors with CHRNA2, CHRNA3 and CHRNA4, as well as CHRNA5 and CHRNB3 as accesory subunits. CHRNA3:CHRNB4 being predominant in neurons of the autonomic ganglia, it is known as ganglionic nicotinic receptor. CHRNA3:CHRNB4 or CHRNA3:CHRNA5:CHRNB4 play also an important role in the habenulo-interpeduncular tract, modulating the mesolimbic dopamine system and affecting reward circuits and addiction. Hypothalamic CHRNA3:CHRNB4 nAChR activation by nicotine leads to activation of POMC neurons and a decrease in food intake. This chain is Neuronal acetylcholine receptor subunit beta-4, found in Homo sapiens (Human).